The following is a 468-amino-acid chain: UDP-N-acetylmuramate--L-alanine ligase (468 aa).

G121–T127 is an ATP binding site.

The protein belongs to the MurCDEF family.

The protein localises to the cytoplasm. The catalysed reaction is UDP-N-acetyl-alpha-D-muramate + L-alanine + ATP = UDP-N-acetyl-alpha-D-muramoyl-L-alanine + ADP + phosphate + H(+). It functions in the pathway cell wall biogenesis; peptidoglycan biosynthesis. Its function is as follows. Cell wall formation. This is UDP-N-acetylmuramate--L-alanine ligase from Borreliella afzelii (strain PKo) (Borrelia afzelii).